The chain runs to 328 residues: GMP reductase (328 aa).

Catalysis depends on cysteine 176, which acts as the Thioimidate intermediate. 205–228 provides a ligand contact to NADP(+); sequence IIADGGIRTHGDIAKSIRFGASMI.

Belongs to the IMPDH/GMPR family. GuaC type 2 subfamily.

The catalysed reaction is IMP + NH4(+) + NADP(+) = GMP + NADPH + 2 H(+). Its function is as follows. Catalyzes the irreversible NADPH-dependent deamination of GMP to IMP. It functions in the conversion of nucleobase, nucleoside and nucleotide derivatives of G to A nucleotides, and in maintaining the intracellular balance of A and G nucleotides. The polypeptide is GMP reductase (Streptococcus pneumoniae serotype 19F (strain G54)).